A 35-amino-acid polypeptide reads, in one-letter code: Phospholipase A2 neuwieditoxin-1 (35 aa).

Ca(2+) contacts are provided by Y27, G29, and G31.

The protein belongs to the phospholipase A2 family. Group II subfamily. D49 sub-subfamily. Dimer. The cofactor is Ca(2+). As to expression, expressed by the venom gland.

Its subcellular location is the secreted. It catalyses the reaction a 1,2-diacyl-sn-glycero-3-phosphocholine + H2O = a 1-acyl-sn-glycero-3-phosphocholine + a fatty acid + H(+). In terms of biological role, snake venom phospholipase A2 (PLA2) that shows presynaptic neurotoxicity. 10 ug/ml of this protein produce complete neuromuscular blockade up to 80 minutes, without inhibiting the responses to acetylcholine (ACh) and potassium chloride (KCl). In addition, it produces a calcium-dependent blockade of acetylcholine release and causes appearance of giant miniature end-plate potentials. PLA2 catalyzes the calcium-dependent hydrolysis of the 2-acyl groups in 3-sn-phosphoglycerides. This is Phospholipase A2 neuwieditoxin-1 from Bothrops pauloensis (Neuwied's lancehead).